The sequence spans 166 residues: Phospholipase A2 inhibitor clone 11 (166 aa).

An N-terminal signal peptide occupies residues M1 to G19. The 116-residue stretch at L46–E161 folds into the C-type lectin domain. Cystine bridges form between C83–C160 and C138–C152. The N-linked (GlcNAc...) asparagine glycan is linked to N122.

Belongs to the alpha-type phospholipase A2 inhibitor family. Homotrimer; non-covalently linked. As to expression, expressed by the liver.

The protein localises to the secreted. This phospholipase A2 inhibitor binds directly phospholipase A2 in the presence or absence of calcium. This chain is Phospholipase A2 inhibitor clone 11, found in Bothrops neuwiedi (Neuwied's lancehead).